Consider the following 248-residue polypeptide: Tyrosine recombinase XerD-like (248 aa).

In terms of domain architecture, Core-binding (CB) spans 1-72; it reads MKSYIEPFIA…TANQFLYYLY (72 aa). The region spanning 85–248 is the Tyr recombinase domain; that stretch reads DTMKVMRTEK…PVTLEKYYKS (164 aa). Active-site residues include Lys-149 and Arg-213. Residue Tyr-245 is the O-(3'-phospho-DNA)-tyrosine intermediate of the active site.

The protein belongs to the 'phage' integrase family. XerD-like subfamily.

It is found in the cytoplasm. Functionally, putative tyrosine recombinase. Not involved in the cutting and rejoining of the recombining DNA molecules on dif(SL) site. The sequence is that of Tyrosine recombinase XerD-like from Streptococcus pyogenes serotype M3 (strain ATCC BAA-595 / MGAS315).